A 618-amino-acid chain; its full sequence is Phosphoenolpyruvate carboxykinase [GTP] (618 aa).

Residues arginine 83 and 217 to 219 contribute to the substrate site; that span reads YGG. The Mn(2+) site is built by lysine 226 and histidine 245. Serine 267 provides a ligand contact to substrate. 268–273 provides a ligand contact to GTP; that stretch reads MCGKTS. Cysteine 269 is an active-site residue. Aspartate 286 is a Mn(2+) binding site. Substrate is bound at residue 381–383; that stretch reads NAR. Arginine 383 and arginine 415 together coordinate GTP.

This sequence belongs to the phosphoenolpyruvate carboxykinase [GTP] family. Mn(2+) serves as cofactor.

Its subcellular location is the cytoplasm. It carries out the reaction oxaloacetate + GTP = phosphoenolpyruvate + GDP + CO2. It participates in carbohydrate biosynthesis; gluconeogenesis. Functionally, catalyzes the conversion of oxaloacetate (OAA) to phosphoenolpyruvate (PEP), the rate-limiting step in the metabolic pathway that produces glucose from lactate and other precursors derived from the citric acid cycle. The protein is Phosphoenolpyruvate carboxykinase [GTP] of Pyrococcus abyssi (strain GE5 / Orsay).